Here is a 28-residue protein sequence, read N- to C-terminus: U15-ctenitoxin-Co1a (28 aa).

2 cysteine pairs are disulfide-bonded: Cys-3-Cys-17 and Cys-10-Cys-22.

In terms of tissue distribution, expressed by the venom gland.

The protein resides in the secreted. Insecticidal neurotoxin that reversibly inhibits the N-methyl-D-aspartate (NMDA)-subtype of ionotropic glutamate receptor (GRIN) and inhibits inactivation of insect sodium channels (Nav). In vivo, is highly toxic to insects. This Ctenus ornatus (Brazilian spider) protein is U15-ctenitoxin-Co1a.